The primary structure comprises 311 residues: Serine/threonine-protein phosphatase 4 catalytic subunit A (311 aa).

Positions 58, 60, 86, and 118 each coordinate Mn(2+). Catalysis depends on His119, which acts as the Proton donor. The Mn(2+) site is built by His168 and His242. Leu311 carries the leucine methyl ester modification.

The protein belongs to the PPP phosphatase family. PP-4 (PP-X) subfamily. Serine/threonine-protein phosphatase 4 (PP4) occurs in different assemblies of the catalytic and one or more regulatory subunits. The cofactor is Mn(2+).

It localises to the cytoplasm. The protein resides in the cytoskeleton. Its subcellular location is the microtubule organizing center. It is found in the centrosome. It carries out the reaction O-phospho-L-seryl-[protein] + H2O = L-seryl-[protein] + phosphate. The enzyme catalyses O-phospho-L-threonyl-[protein] + H2O = L-threonyl-[protein] + phosphate. Functionally, protein phosphatase that regulates many processes such as microtubule organization at centrosomes. The chain is Serine/threonine-protein phosphatase 4 catalytic subunit A (ppp4ca) from Danio rerio (Zebrafish).